Here is a 365-residue protein sequence, read N- to C-terminus: DNA replication and repair protein RecF (365 aa).

Position 30-37 (30-37 (GLNGSGKT)) interacts with ATP.

It belongs to the RecF family.

The protein resides in the cytoplasm. Functionally, the RecF protein is involved in DNA metabolism; it is required for DNA replication and normal SOS inducibility. RecF binds preferentially to single-stranded, linear DNA. It also seems to bind ATP. In Cellvibrio japonicus (strain Ueda107) (Pseudomonas fluorescens subsp. cellulosa), this protein is DNA replication and repair protein RecF.